Here is a 201-residue protein sequence, read N- to C-terminus: Large ribosomal subunit protein uL4 (201 aa).

The disordered stretch occupies residues Gly39–Ala70.

This sequence belongs to the universal ribosomal protein uL4 family. In terms of assembly, part of the 50S ribosomal subunit.

Functionally, one of the primary rRNA binding proteins, this protein initially binds near the 5'-end of the 23S rRNA. It is important during the early stages of 50S assembly. It makes multiple contacts with different domains of the 23S rRNA in the assembled 50S subunit and ribosome. In terms of biological role, forms part of the polypeptide exit tunnel. This Marinobacter nauticus (strain ATCC 700491 / DSM 11845 / VT8) (Marinobacter aquaeolei) protein is Large ribosomal subunit protein uL4.